We begin with the raw amino-acid sequence, 751 residues long: Catalase-peroxidase (751 aa).

Positions 1 to 21 (MSNESKCPFHQTAGGGTTNRD) are disordered. Positions 90 to 244 (WHSAGTYRIG…LAAVQMGLIY (155 aa)) form a cross-link, tryptophyl-tyrosyl-methioninium (Trp-Tyr) (with M-270). The active-site Proton acceptor is the H91. Residues 195-227 (YGKDQVKAQPPGQGDLVAEPAKHGEEQNRDLSA) form a disordered region. Residues 214 to 227 (PAKHGEEQNRDLSA) are compositionally biased toward basic and acidic residues. Residues 244–270 (YVNPEGPEGNPDPVASGKDIRETFGRM) constitute a cross-link (tryptophyl-tyrosyl-methioninium (Tyr-Met) (with W-90)). Residue H285 coordinates heme b. Positions 364-385 (GAHQWRPKDGKGAGTVPDAHDP) are disordered.

Belongs to the peroxidase family. Peroxidase/catalase subfamily. Homodimer or homotetramer. It depends on heme b as a cofactor. Formation of the three residue Trp-Tyr-Met cross-link is important for the catalase, but not the peroxidase activity of the enzyme.

The enzyme catalyses H2O2 + AH2 = A + 2 H2O. The catalysed reaction is 2 H2O2 = O2 + 2 H2O. Functionally, bifunctional enzyme with both catalase and broad-spectrum peroxidase activity. The chain is Catalase-peroxidase from Pseudomonas putida (strain ATCC 47054 / DSM 6125 / CFBP 8728 / NCIMB 11950 / KT2440).